A 138-amino-acid polypeptide reads, in one-letter code: MSRKLARELTMKVLFEMHINNDFNIQRVEHHLFEGSIEEQQKEYIHKVLNEAILNLEAIDSIIEEYSTSWKLNRIANVDLAILRLAFSEIIYMKDIPYRVSINEAIELAKIYGSDETPNFVNGILGKYVEQEGLMLNE.

This sequence belongs to the NusB family.

Its function is as follows. Involved in transcription antitermination. Required for transcription of ribosomal RNA (rRNA) genes. Binds specifically to the boxA antiterminator sequence of the ribosomal RNA (rrn) operons. The polypeptide is Transcription antitermination protein NusB (Alkaliphilus oremlandii (strain OhILAs) (Clostridium oremlandii (strain OhILAs))).